The sequence spans 274 residues: Large ribosomal subunit protein uL2 (274 aa).

A disordered region spans residues 228–254 (VDHPMGGGEGRASGGHPRSRKGLYAKG). A compositionally biased stretch (basic residues) spans 244-254 (PRSRKGLYAKG).

Belongs to the universal ribosomal protein uL2 family. In terms of assembly, part of the 50S ribosomal subunit. Forms a bridge to the 30S subunit in the 70S ribosome.

Its function is as follows. One of the primary rRNA binding proteins. Required for association of the 30S and 50S subunits to form the 70S ribosome, for tRNA binding and peptide bond formation. It has been suggested to have peptidyltransferase activity; this is somewhat controversial. Makes several contacts with the 16S rRNA in the 70S ribosome. The sequence is that of Large ribosomal subunit protein uL2 from Azobacteroides pseudotrichonymphae genomovar. CFP2.